The sequence spans 125 residues: Phosphoribosyl-AMP cyclohydrolase (125 aa).

Residue aspartate 74 participates in Mg(2+) binding. Residue cysteine 75 coordinates Zn(2+). The Mg(2+) site is built by aspartate 76 and aspartate 78. Zn(2+) contacts are provided by cysteine 92 and cysteine 99.

The protein belongs to the PRA-CH family. Homodimer. The cofactor is Mg(2+). Zn(2+) is required as a cofactor.

It is found in the cytoplasm. It carries out the reaction 1-(5-phospho-beta-D-ribosyl)-5'-AMP + H2O = 1-(5-phospho-beta-D-ribosyl)-5-[(5-phospho-beta-D-ribosylamino)methylideneamino]imidazole-4-carboxamide. The protein operates within amino-acid biosynthesis; L-histidine biosynthesis; L-histidine from 5-phospho-alpha-D-ribose 1-diphosphate: step 3/9. Catalyzes the hydrolysis of the adenine ring of phosphoribosyl-AMP. The protein is Phosphoribosyl-AMP cyclohydrolase of Trichlorobacter lovleyi (strain ATCC BAA-1151 / DSM 17278 / SZ) (Geobacter lovleyi).